The chain runs to 158 residues: uncharacterized protein (158 aa).

This is an uncharacterized protein from Saccharolobus islandicus (Sulfolobus islandicus).